Consider the following 452-residue polypeptide: Probable 1,4-beta-D-glucan cellobiohydrolase A (452 aa).

The first 17 residues, 1 to 17, serve as a signal peptide directing secretion; the sequence is MHQRALLFSALAVAANA. An N-linked (GlcNAc...) asparagine glycan is attached at Asn81. The active-site Nucleophile is the Glu226. Glu231 acts as the Proton donor in catalysis. Asn284 carries an N-linked (GlcNAc...) asparagine glycan. Residues 406-432 form a disordered region; that stretch reads DPSKPGVARGTCEHGAGDPEKVESQHP. The span at 416–431 shows a compositional bias: basic and acidic residues; it reads TCEHGAGDPEKVESQH.

Belongs to the glycosyl hydrolase 7 (cellulase C) family.

It localises to the secreted. The enzyme catalyses Hydrolysis of (1-&gt;4)-beta-D-glucosidic linkages in cellulose and cellotetraose, releasing cellobiose from the non-reducing ends of the chains.. The biological conversion of cellulose to glucose generally requires three types of hydrolytic enzymes: (1) Endoglucanases which cut internal beta-1,4-glucosidic bonds; (2) Exocellobiohydrolases that cut the disaccharide cellobiose from the non-reducing end of the cellulose polymer chain; (3) Beta-1,4-glucosidases which hydrolyze the cellobiose and other short cello-oligosaccharides to glucose. This chain is Probable 1,4-beta-D-glucan cellobiohydrolase A (cbhA), found in Neosartorya fischeri (strain ATCC 1020 / DSM 3700 / CBS 544.65 / FGSC A1164 / JCM 1740 / NRRL 181 / WB 181) (Aspergillus fischerianus).